Reading from the N-terminus, the 389-residue chain is MKTFILLAVLGLASASVHQHKIVWRESKKMGMIRTGQYPAYLEYQRNLRAVSPNVLANLPQNVNDFGDFEYLGNITIGTPDQGFIVVLDTGSSNLWIPGPTCKTNCKTKSKFDSTASSTFVKNGKSWTIQYGSGDAAGILGQDTVRFGAKGDSQLSVPTTTFGIASKISADFKNDATDGILGLAFTSLAVDGVVPPLINAINQGILDQPLFSVWLEHRGAANNVGGGVFTYGAIDTTNCGALVAYQPLSSATYYQFKAAGFKLGSYSNTKTVDVISDTGTSFLGGPQSVVDGLAKAAGATYDDFNEVYFIDCAAQPGTLDITIGTNTYSIQPVNYIVDAGNGQCLFAAFPFDFGGFGPSWILGDPFIRQYCNIYDIGNKRMGFAPSLQK.

The first 15 residues, 1 to 15 (MKTFILLAVLGLASA), serve as a signal peptide directing secretion. Residues 71–384 (YLGNITIGTP…DIGNKRMGFA (314 aa)) enclose the Peptidase A1 domain. An N-linked (GlcNAc...) asparagine glycan is attached at N74. D89 is a catalytic residue. Residues C102 and C106 are joined by a disulfide bond. D277 is a catalytic residue. A disulfide bridge links C312 with C344.

This sequence belongs to the peptidase A1 family. Post-translationally, glycosylated. Has phosphorylcholine-substituted oligosaccharide N-glycans. In terms of tissue distribution, expressed in intestine, muscles, pharynx and hypodermis.

It is found in the secreted. In terms of biological role, aspartic protease. In Caenorhabditis elegans, this protein is Aspartic protease 6.